The following is a 528-amino-acid chain: Acid-sensing ion channel 1 (528 aa).

Over 1 to 49 (MELKAEEEEVGGVQPVSIQAFASSSTLHGLAHIFSYERLSLKRALWALC) the chain is Cytoplasmic. The chain crosses the membrane as a helical span at residues 50 to 66 (FLGSLAVLLCVCTERVQ). Residues 67–427 (YYFHYHHVTK…ETIEQKKAYE (361 aa)) lie on the Extracellular side of the membrane. Disulfide bonds link Cys-93–Cys-194, Cys-172–Cys-179, Cys-290–Cys-367, Cys-310–Cys-363, Cys-314–Cys-361, Cys-323–Cys-345, and Cys-325–Cys-337. Residues Asn-368 and Asn-395 are each glycosylated (N-linked (GlcNAc...) asparagine). A discontinuously helical membrane pass occupies residues 428–458 (IAGLLGDIGGQMGLFIGASILTVLELFDYAY). The GAS motif; ion selectivity filter signature appears at 444 to 446 (GAS). Residues 459-528 (EVIKHKLCRR…ARGTFEDFTC (70 aa)) are Cytoplasmic-facing. Ser-479 is subject to Phosphoserine; by PKA. The residue at position 499 (Ser-499) is a Phosphoserine.

It belongs to the amiloride-sensitive sodium channel (TC 1.A.6) family. ASIC1 subfamily. As to quaternary structure, forms functional homotrimeric channels. Forms heterotrimers with other ASIC proteins, resulting in channels with distinct properties. Interacts with PICK1; regulates ASIC1 clustering in membranes. Interacts with STOM; alters heterotrimeric channels activity. Post-translationally, pH-gating could be regulated by serine proteases. Phosphorylation by PKA regulates interaction with PICK1 and subcellular localization. Phosphorylation by PKC may regulate the channel. As to expression, expressed in neurons throughout the central and peripheral nervous system.

It localises to the cell membrane. The protein localises to the postsynaptic cell membrane. It is found in the cell projection. Its subcellular location is the dendrite. It carries out the reaction Na(+)(in) = Na(+)(out). It catalyses the reaction K(+)(in) = K(+)(out). The enzyme catalyses Li(+)(in) = Li(+)(out). The catalysed reaction is Ca(2+)(in) = Ca(2+)(out). Its activity is regulated as follows. Potentiated by FMRFamide-related neuropeptides, which are induced during inflammation and modulate pain responses. Inhibited by the diuretic drug amiloride. Spider venom psalmotoxin-1 inhibits the channel by locking it in its desensitized conformation. The homotrimeric channel is inhibited by the spider venom pi-theraphotoxin-Hm3a. Homotrimeric and heterotrimeric (with ASIC2 isoform 1) channels are inhibited by the snake venom mambalgin-1, which prevents proton-induced transitions from the resting closed state to the active and/or desensitized states. Inhibited by Texas coral snake toxin MitTx1. Forms voltage-independent, pH-gated trimeric sodium channels that act as postsynaptic excitatory receptors in the nervous system, playing a crucial role in regulating synaptic plasticity, learning, and memory. Upon extracellular pH drop this channel elicits transient, fast activating, and completely desensitizing inward currents. Displays high selectivity for sodium ions but can also permit the permeation of other cations. Regulates more or less directly intracellular calcium concentration and CaMKII phosphorylation, and thereby the density of dendritic spines. Modulates neuronal activity in the circuits underlying innate fear. In terms of biological role, has high selectivity for sodium ions, but can also be permeable to other cations including calcium, lithium and potassium. Functionally, produces acid activated currents with a reduced amplitude and inactivates faster. Has high selectivity for sodium ions but also supports a calcium-mediated current which is sustained and maintained as long as acidic conditions are present. Also potentially permeable to lithium and potassium. Its function is as follows. Has no measurable proton-gated sodium channel activity in vitro. The polypeptide is Acid-sensing ion channel 1 (Homo sapiens (Human)).